Here is a 154-residue protein sequence, read N- to C-terminus: Anaerobic ribonucleoside-triphosphate reductase-activating protein (154 aa).

[4Fe-4S] cluster contacts are provided by cysteine 26, cysteine 30, and cysteine 33. Residues 32 to 34 (GCY) and glycine 74 each bind S-adenosyl-L-methionine.

It belongs to the organic radical-activating enzymes family. In terms of assembly, forms a tetramer composed of two NrdD and two NrdG subunits. [4Fe-4S] cluster is required as a cofactor.

Its subcellular location is the cytoplasm. The catalysed reaction is glycyl-[protein] + reduced [flavodoxin] + S-adenosyl-L-methionine = glycin-2-yl radical-[protein] + semiquinone [flavodoxin] + 5'-deoxyadenosine + L-methionine + H(+). Its function is as follows. Activation of anaerobic ribonucleoside-triphosphate reductase under anaerobic conditions by generation of an organic free radical, using S-adenosylmethionine and reduced flavodoxin as cosubstrates to produce 5'-deoxy-adenosine. This Escherichia coli O157:H7 protein is Anaerobic ribonucleoside-triphosphate reductase-activating protein (nrdG).